A 258-amino-acid polypeptide reads, in one-letter code: Alpha-fibrinogenase-like (258 aa).

The N-terminal stretch at 1–18 (MVLIRVLANLLVLQLSYA) is a signal peptide. The propeptide occupies 19 to 24 (QKSSEL). A Peptidase S1 domain is found at 25 to 249 (VVGGHPCNIY…YTDWIHSIIA (225 aa)). 6 cysteine pairs are disulfide-bonded: cysteine 31-cysteine 163, cysteine 50-cysteine 66, cysteine 98-cysteine 256, cysteine 142-cysteine 210, cysteine 174-cysteine 189, and cysteine 200-cysteine 225. A glycan (N-linked (GlcNAc...) asparagine) is linked at asparagine 44. Active-site charge relay system residues include histidine 65 and aspartate 110. The active-site Charge relay system is serine 204.

The protein belongs to the peptidase S1 family. Snake venom subfamily. Monomer. In terms of tissue distribution, expressed by the venom gland.

The protein resides in the secreted. Its function is as follows. Degrades alpha chain of fibrinogen (FGA), and has strong caseinolytic activity. Cleaves oxidized insulin B-chain at '40-Tyr-|-Leu-41', '48-Phe-|-Phe-49' and '49-Phe-|-Tyr-50', and glucagon at the bonds '62-Tyr-|-Ser-63', 66-Leu-|-Asp-67' and '78-Leu-|-Met-79' bonds. The protein is Alpha-fibrinogenase-like of Daboia siamensis (Eastern Russel's viper).